The primary structure comprises 303 residues: Protoheme IX farnesyltransferase (303 aa).

9 consecutive transmembrane segments (helical) span residues 30–50 (VMSL…STVS), 54–74 (AMIA…LNMW), 101–121 (ALIF…YFAN), 123–143 (ISAV…TIWL), 150–170 (NIVI…TIAT), 178–198 (ITFF…LSLY), 219–241 (STKI…PYAI), 245–262 (GLVF…YNIL), and 279–299 (AKTI…IFLI).

The protein belongs to the UbiA prenyltransferase family. Protoheme IX farnesyltransferase subfamily.

It localises to the cell inner membrane. The enzyme catalyses heme b + (2E,6E)-farnesyl diphosphate + H2O = Fe(II)-heme o + diphosphate. It participates in porphyrin-containing compound metabolism; heme O biosynthesis; heme O from protoheme: step 1/1. Functionally, converts heme B (protoheme IX) to heme O by substitution of the vinyl group on carbon 2 of heme B porphyrin ring with a hydroxyethyl farnesyl side group. The chain is Protoheme IX farnesyltransferase from Pelagibacter ubique (strain HTCC1062).